The primary structure comprises 194 residues: MERGMNHRILYPFADFGDTVAILPANETQRKGLDTPVDDRDGDDSLVTYFELARVMERASRRFSGLLRAELTKLGVEDIGPAQAMVLLAIGEAELSVGELLDRGHYVGSNISYYLKQLADGDYIDRIASQRDKRSARIRLSEKGRQLCAGLRQAAKGYERALSHGDQDRRNLETAFQTLHRLELVWGNAARYGI.

Positions 49-184 constitute an HTH marR-type domain; it reads YFELARVMER…AFQTLHRLEL (136 aa).

Its function is as follows. Transcriptional activator of genes for galactoglucan synthesis (exopolysaccharide II or EPS II). The sequence is that of Exopolysaccharide II synthesis transcriptional activator ExpG (expG) from Rhizobium meliloti (strain 1021) (Ensifer meliloti).